The primary structure comprises 202 residues: Orotate phosphoribosyltransferase (202 aa).

Residues Arg-94, Lys-98, His-100, and 120–128 (EDLISTGGS) contribute to the 5-phospho-alpha-D-ribose 1-diphosphate site. Ser-124 serves as a coordination point for orotate.

This sequence belongs to the purine/pyrimidine phosphoribosyltransferase family. PyrE subfamily. Homodimer. Mg(2+) is required as a cofactor.

It carries out the reaction orotidine 5'-phosphate + diphosphate = orotate + 5-phospho-alpha-D-ribose 1-diphosphate. Its pathway is pyrimidine metabolism; UMP biosynthesis via de novo pathway; UMP from orotate: step 1/2. Functionally, catalyzes the transfer of a ribosyl phosphate group from 5-phosphoribose 1-diphosphate to orotate, leading to the formation of orotidine monophosphate (OMP). This Oceanobacillus iheyensis (strain DSM 14371 / CIP 107618 / JCM 11309 / KCTC 3954 / HTE831) protein is Orotate phosphoribosyltransferase.